The following is a 707-amino-acid chain: MKTFSESHKTVFVVDHCPYMSESCRQHVEFDMLTKNRTQGIIPLAPISKSLWTCAIEASMEYCRIMYDIFPFRKLVNFIVSDSGSRTLNSWNQEDQNLQELMAALAVIGPPNPRADPECCSILHGLVEAVESLCKITDYQHESRTELMENADRVANRGRIICITNAKSDSHVQMLEDCVNETIHEHNKLAAGSDHLMQIQKCHLVLIHTYPVGEDSLVSDRPKKELSNVLISEVHSVKAGRHLSTKLNQLVQLHFDLASTTITNIPMKEEQHANTSANYDVELLHHKEAHVEFNKSAGEGYNGSSSRENCLKETVTLKWCTPRTNSVELHYCTGAFRISPVDVNSRPSSCLTNFLLNGRSVLLEQPRKSGSKVISHMLSSHGGEIFLHVLSSSRSILEDPPSISEGCGGRVTDYRITDFGEFMRENRLMPFAEPRYCMDGGPEVPLERAKEQLERHTRYWPMIISQTTIFNMQAVVPLASVIVKESLSEEDVLNCQKTIYNLVDMERKNDPLPISTAGTRGKGPKRDEQYRIMWNELETLVRAHVRGSDRHQRVMDCLMACRSKPPEEEERKKRGRKREDKEEKAEKPPKENEHEKKWQESERVKSVLDREKEDLAEAEVIKDSPDSPEPPNKKPHIMVEDTGPAEKSKGPMSLLSLWSSRINTANSRKHQEFVGRLNSVNNKAELYQHLKEENGAEGVENGKGSRQ.

The span at 565–625 shows a compositional bias: basic and acidic residues; it reads PPEEEERKKR…AEAEVIKDSP (61 aa). Positions 565 to 651 are disordered; sequence PPEEEERKKR…TGPAEKSKGP (87 aa). Residues 567 to 622 adopt a coiled-coil conformation; the sequence is EEEERKKRGRKREDKEEKAEKPPKENEHEKKWQESERVKSVLDREKEDLAEAEVIK. A Nuclear localization signal (NLS) motif is present at residues 573–583; the sequence is KRGRKREDKEE. Residues 650–695 are cleavage module binding motif (CMBM); sequence GPMSLLSLWSSRINTANSRKHQEFVGRLNSVNNKAELYQHLKEENG.

The protein belongs to the Integrator subunit 13 family. Component of the Integrator complex, composed of core subunits INTS1, INTS2, INTS3, INTS4, INTS5, INTS6, INTS7, INTS8, INTS9/RC74, INTS10, INTS11/CPSF3L, INTS12, INTS13, INTS14 and INTS15. The core complex associates with protein phosphatase 2A subunits PPP2CA and PPP2R1A, to form the Integrator-PP2A (INTAC) complex. INTS13 is part of the tail subcomplex, composed of INTS10, INTS13, INTS14 and INTS15.

Its subcellular location is the nucleus. It is found in the cytoplasm. Functionally, component of the integrator complex, a multiprotein complex that terminates RNA polymerase II (Pol II) transcription in the promoter-proximal region of genes. The integrator complex provides a quality checkpoint during transcription elongation by driving premature transcription termination of transcripts that are unfavorably configured for transcriptional elongation: the complex terminates transcription by (1) catalyzing dephosphorylation of the C-terminal domain (CTD) of Pol II subunit POLR2A/RPB1 and SUPT5H/SPT5, (2) degrading the exiting nascent RNA transcript via endonuclease activity and (3) promoting the release of Pol II from bound DNA. The integrator complex is also involved in terminating the synthesis of non-coding Pol II transcripts, such as enhancer RNAs (eRNAs), small nuclear RNAs (snRNAs), telomerase RNAs and long non-coding RNAs (lncRNAs). Within the integrator complex, INTS13 is part of the integrator tail module and acts as a platform for the recruitment of transcription factors at promoters. This is Integrator complex subunit 13 from Xenopus tropicalis (Western clawed frog).